The primary structure comprises 284 residues: Co-chaperone protein DjlA (284 aa).

Over 1–6 (MHIFGK) the chain is Periplasmic. The helical transmembrane segment at 7–30 (ILGAFFGFLFGGPFGAIFGIFLGH) threads the bilayer. The Cytoplasmic segment spans residues 31–284 (QFDKARRLNQ…ELIRKEKGIK (254 aa)). The disordered stretch occupies residues 190–211 (QGGGFGGSQQQSHSGQQWQQPS). Over residues 197–211 (SQQQSHSGQQWQQPS) the composition is skewed to low complexity. In terms of domain architecture, J spans 218-284 (DAYEVLGVSE…ELIRKEKGIK (67 aa)).

Homodimer.

The protein resides in the cell inner membrane. In terms of biological role, regulatory DnaK co-chaperone. Direct interaction between DnaK and DjlA is needed for the induction of the wcaABCDE operon, involved in the synthesis of a colanic acid polysaccharide capsule, possibly through activation of the RcsB/RcsC phosphotransfer signaling pathway. The colanic acid capsule may help the bacterium survive conditions outside the host. This Vibrio cholerae serotype O1 (strain ATCC 39315 / El Tor Inaba N16961) protein is Co-chaperone protein DjlA.